Consider the following 283-residue polypeptide: 2-dehydro-3-deoxyphosphooctonate aldolase (283 aa).

The protein belongs to the KdsA family.

It localises to the cytoplasm. The catalysed reaction is D-arabinose 5-phosphate + phosphoenolpyruvate + H2O = 3-deoxy-alpha-D-manno-2-octulosonate-8-phosphate + phosphate. The protein operates within carbohydrate biosynthesis; 3-deoxy-D-manno-octulosonate biosynthesis; 3-deoxy-D-manno-octulosonate from D-ribulose 5-phosphate: step 2/3. It functions in the pathway bacterial outer membrane biogenesis; lipopolysaccharide biosynthesis. The polypeptide is 2-dehydro-3-deoxyphosphooctonate aldolase (Parasynechococcus marenigrum (strain WH8102)).